The primary structure comprises 60 residues: Metallothionein A (60 aa).

The beta stretch occupies residues 1–28 (MDPCECSKSGTCNCGGSCTCTNCSCKSC). Residues Cys4, Cys6, Cys12, Cys14, Cys18, Cys20, Cys23, Cys25, Cys28, Cys32, Cys33, Cys35, Cys36, Cys40, Cys43, Cys47, Cys49, Cys54, Cys58, and Cys59 each coordinate a divalent metal cation. The segment at 29-60 (KKSCCPCCPSGCTKCASGCVCKGKTCDTSCCQ) is alpha.

It belongs to the metallothionein superfamily. Type 1 family.

Functionally, metallothioneins have a high content of cysteine residues that bind various heavy metals. The polypeptide is Metallothionein A (mta) (Chionodraco rastrospinosus (Ocellated icefish)).